The sequence spans 420 residues: Tyrosine-protein phosphatase non-receptor type 20 (420 aa).

A compositionally biased stretch (basic and acidic residues) spans 1–11 (MSSPRDFRAEP). Disordered stretches follow at residues 1-47 (MSSP…VFEN) and 68-108 (DVFE…SQAL). Residues 31–41 (LPSSSQENTPR) show a composition bias toward polar residues. Residues Ser76 and Ser120 each carry the phosphoserine modification. A Tyrosine-protein phosphatase domain is found at 159–412 (IMQEFMALEL…HFCYDIVLEV (254 aa)). Residues Asp323, 353–359 (CSAGIGR), and Gln397 each bind substrate. Cys353 (phosphocysteine intermediate) is an active-site residue.

This sequence belongs to the protein-tyrosine phosphatase family. Non-receptor class subfamily. As to expression, present in many cell lines (at protein level). Widely expressed.

It is found in the nucleus. The protein resides in the cytoplasm. Its subcellular location is the cytoskeleton. It localises to the microtubule organizing center. The protein localises to the centrosome. The enzyme catalyses O-phospho-L-tyrosyl-[protein] + H2O = L-tyrosyl-[protein] + phosphate. Tyrosine-protein phosphatase targeted to sites of actin polymerization in response of varied extracellular stimuli. Has tyrosine phosphatase activity towards various tyrosyl phosphorylated substrates. This is Tyrosine-protein phosphatase non-receptor type 20 from Homo sapiens (Human).